The sequence spans 429 residues: Glutamyl-tRNA reductase (429 aa).

Substrate is bound by residues 52–55 (TCNR), serine 110, 115–117 (EAQ), and glutamine 121. The active-site Nucleophile is cysteine 53. 190 to 195 (GAGAMI) is a binding site for NADP(+).

Belongs to the glutamyl-tRNA reductase family. Homodimer.

It catalyses the reaction (S)-4-amino-5-oxopentanoate + tRNA(Glu) + NADP(+) = L-glutamyl-tRNA(Glu) + NADPH + H(+). The protein operates within porphyrin-containing compound metabolism; protoporphyrin-IX biosynthesis; 5-aminolevulinate from L-glutamyl-tRNA(Glu): step 1/2. Its function is as follows. Catalyzes the NADPH-dependent reduction of glutamyl-tRNA(Glu) to glutamate 1-semialdehyde (GSA). The chain is Glutamyl-tRNA reductase from Verminephrobacter eiseniae (strain EF01-2).